The sequence spans 310 residues: uncharacterized protein (310 aa).

Disordered stretches follow at residues 22–163 (LARQ…PVEH) and 178–209 (EAEA…VEGD). Basic and acidic residues-rich tracts occupy residues 56-66 (IIRDDHHHAGP) and 183-197 (TEVR…ERHA). Low complexity predominate over residues 198 to 209 (AAAAAGTDVEGD). A run of 3 helical transmembrane segments spans residues 231–251 (ALVV…FIAF), 257–277 (WNSI…VVSV), and 286–306 (IAST…PLAL).

To M.leprae ML2433.

Its subcellular location is the cell membrane. This is an uncharacterized protein from Mycobacterium tuberculosis (strain CDC 1551 / Oshkosh).